The sequence spans 125 residues: Unclassified hydrophobin 8 (125 aa).

Positions 1–20 (MMFSKPVVLATTALATFAAA) are cleaved as a signal peptide. 4 cysteine pairs are disulfide-bonded: cysteine 31–cysteine 105, cysteine 38–cysteine 99, cysteine 39–cysteine 90, and cysteine 106–cysteine 119.

This sequence belongs to the fungal hydrophobin family. As to quaternary structure, self-assembles to form functional amyloid fibrils called rodlets. Self-assembly into fibrillar rodlets occurs spontaneously at hydrophobic:hydrophilic interfaces and the rodlets further associate laterally to form amphipathic monolayers.

It is found in the secreted. It localises to the cell wall. In terms of biological role, aerial growth, conidiation, and dispersal of filamentous fungi in the environment rely upon a capability of their secreting small amphipathic proteins called hydrophobins (HPBs) with low sequence identity. Class I can self-assemble into an outermost layer of rodlet bundles on aerial cell surfaces, conferring cellular hydrophobicity that supports fungal growth, development and dispersal; whereas Class II form highly ordered films at water-air interfaces through intermolecular interactions but contribute nothing to the rodlet structure. Hydph8 is an unclassified hydrophobin involved in mycelial growth. This is Unclassified hydrophobin 8 from Pleurotus ostreatus (strain PC15) (Oyster mushroom).